A 352-amino-acid chain; its full sequence is Endoplasmic reticulum GDP-fucose transporter (352 aa).

Helical transmembrane passes span 9-29, 34-54, 70-90, 96-116, 126-146, 163-183, 201-221, 249-271, 276-298, and 305-325; these read LGMLFVFIGCCSNVVFLELII, GAGNLITFAQFLFIALEGLVF, YVILVALFFGANVCNNYAFNF, LHMIFRSGSLMANMIMGIVLL, SSVAMITAGIILCTLVSSGDV, FFWWTVGIGLLTIALLVTAYM, ALFFTHMLPLPGFLIMAGNIV, LMLFYLLCNVVTQYVCISAVYVL, ASLTVTLVVTLRKFVSLLFSIIY, and LNHWVGTILVFFGTILFANVI. The Prevents secretion from ER signature appears at 350–352; the sequence is KVE.

The protein belongs to the nucleotide-sugar transporter family. SLC35B subfamily.

The protein localises to the endoplasmic reticulum membrane. In terms of biological role, sugar transporter that specifically mediates the transport of UDP-N-acetylglucosamine (UDP-GlcNAc), GDP-fucose and UDP-xylose. Functions redundantly with Gfr in the O-fucosylation of Notch, positively regulating Notch signaling. Involved in the biosynthesis of heparan sulfate-glycosaminoglycan (HS-GAG) and in Dpp signaling in the wing imaginal disk. This is Endoplasmic reticulum GDP-fucose transporter from Drosophila melanogaster (Fruit fly).